The chain runs to 374 residues: DNA replication and repair protein RecF (374 aa).

30 to 37 (GENAQGKT) is an ATP binding site.

Belongs to the RecF family.

It localises to the cytoplasm. In terms of biological role, the RecF protein is involved in DNA metabolism; it is required for DNA replication and normal SOS inducibility. RecF binds preferentially to single-stranded, linear DNA. It also seems to bind ATP. This Geobacillus sp. (strain WCH70) protein is DNA replication and repair protein RecF.